The following is a 521-amino-acid chain: Protein nucleotidyltransferase YdiU (521 aa).

ATP is bound by residues Gly-109, Gly-111, Arg-112, Lys-131, Asp-143, Gly-144, Arg-194, and Arg-201. Asp-270 (proton acceptor) is an active-site residue. Residues Asn-271 and Asp-280 each contribute to the Mg(2+) site. An ATP-binding site is contributed by Asp-280.

The protein belongs to the SELO family. The cofactor is Mg(2+). Mn(2+) is required as a cofactor.

It carries out the reaction L-seryl-[protein] + ATP = 3-O-(5'-adenylyl)-L-seryl-[protein] + diphosphate. The catalysed reaction is L-threonyl-[protein] + ATP = 3-O-(5'-adenylyl)-L-threonyl-[protein] + diphosphate. It catalyses the reaction L-tyrosyl-[protein] + ATP = O-(5'-adenylyl)-L-tyrosyl-[protein] + diphosphate. The enzyme catalyses L-histidyl-[protein] + UTP = N(tele)-(5'-uridylyl)-L-histidyl-[protein] + diphosphate. It carries out the reaction L-seryl-[protein] + UTP = O-(5'-uridylyl)-L-seryl-[protein] + diphosphate. The catalysed reaction is L-tyrosyl-[protein] + UTP = O-(5'-uridylyl)-L-tyrosyl-[protein] + diphosphate. Nucleotidyltransferase involved in the post-translational modification of proteins. It can catalyze the addition of adenosine monophosphate (AMP) or uridine monophosphate (UMP) to a protein, resulting in modifications known as AMPylation and UMPylation. In Burkholderia mallei (strain ATCC 23344), this protein is Protein nucleotidyltransferase YdiU.